The primary structure comprises 546 residues: Probable sucrose-6-phosphate hydrolase (546 aa).

Residues 105–108, Gln124, 167–168, 228–229, and Glu283 each bind substrate; these read LLND, FS, and RD. Asp108 is an active-site residue.

The protein belongs to the glycosyl hydrolase 32 family.

The protein localises to the cytoplasm. The catalysed reaction is Hydrolysis of terminal non-reducing beta-D-fructofuranoside residues in beta-D-fructofuranosides.. It functions in the pathway glycan biosynthesis; sucrose metabolism. Functionally, enables the bacterium to metabolize sucrose as a sole carbon source. This Vibrio cholerae protein is Probable sucrose-6-phosphate hydrolase.